The primary structure comprises 316 residues: tRNA-cytidine(32) 2-sulfurtransferase (316 aa).

A disordered region spans residues M1–R31. Low complexity predominate over residues P10–P21. Residues S62 to S67 carry the PP-loop motif motif. [4Fe-4S] cluster contacts are provided by C137, C140, and C228.

It belongs to the TtcA family. As to quaternary structure, homodimer. Requires Mg(2+) as cofactor. [4Fe-4S] cluster is required as a cofactor.

Its subcellular location is the cytoplasm. It carries out the reaction cytidine(32) in tRNA + S-sulfanyl-L-cysteinyl-[cysteine desulfurase] + AH2 + ATP = 2-thiocytidine(32) in tRNA + L-cysteinyl-[cysteine desulfurase] + A + AMP + diphosphate + H(+). It participates in tRNA modification. Its function is as follows. Catalyzes the ATP-dependent 2-thiolation of cytidine in position 32 of tRNA, to form 2-thiocytidine (s(2)C32). The sulfur atoms are provided by the cysteine/cysteine desulfurase (IscS) system. In Verminephrobacter eiseniae (strain EF01-2), this protein is tRNA-cytidine(32) 2-sulfurtransferase.